The primary structure comprises 176 residues: Nucleoside triphosphate/diphosphate phosphatase (176 aa).

Arg23 acts as the Proton donor in catalysis. Mg(2+) contacts are provided by Asn87, Asp103, Asp105, Asp107, Asp120, and Glu123.

The protein belongs to the Ntdp family. Requires Mg(2+) as cofactor.

The catalysed reaction is a ribonucleoside 5'-triphosphate + H2O = a ribonucleoside 5'-diphosphate + phosphate + H(+). It catalyses the reaction a ribonucleoside 5'-diphosphate + H2O = a ribonucleoside 5'-phosphate + phosphate + H(+). Its function is as follows. Has nucleoside phosphatase activity towards nucleoside triphosphates and nucleoside diphosphates. This chain is Nucleoside triphosphate/diphosphate phosphatase, found in Bacillus anthracis (strain A0248).